The chain runs to 80 residues: MPQEIGDIKKFIEICRRKDASAARIKKNKATQQIKFKVRCQKYLYTLVLKDSDKAEKLKASLPPSLTIADVAKRNKKQTA.

The protein belongs to the eukaryotic ribosomal protein eL38 family. As to quaternary structure, component of the large ribosomal subunit (LSU). Mature N.crassa ribosomes consist of a small (40S) and a large (60S) subunit. The 40S small subunit contains 1 molecule of ribosomal RNA (18S rRNA) and at least 32 different proteins. The large 60S subunit contains 3 rRNA molecules (26S, 5.8S and 5S rRNA) and at least 42 different proteins.

It localises to the cytoplasm. Its function is as follows. Component of the ribosome, a large ribonucleoprotein complex responsible for the synthesis of proteins in the cell. The small ribosomal subunit (SSU) binds messenger RNAs (mRNAs) and translates the encoded message by selecting cognate aminoacyl-transfer RNA (tRNA) molecules. The large subunit (LSU) contains the ribosomal catalytic site termed the peptidyl transferase center (PTC), which catalyzes the formation of peptide bonds, thereby polymerizing the amino acids delivered by tRNAs into a polypeptide chain. The nascent polypeptides leave the ribosome through a tunnel in the LSU and interact with protein factors that function in enzymatic processing, targeting, and the membrane insertion of nascent chains at the exit of the ribosomal tunnel. The sequence is that of Large ribosomal subunit protein eL38 (rpl-38) from Neurospora crassa (strain ATCC 24698 / 74-OR23-1A / CBS 708.71 / DSM 1257 / FGSC 987).